The primary structure comprises 271 residues: Formamidopyrimidine-DNA glycosylase (271 aa).

Residue P2 is the Schiff-base intermediate with DNA of the active site. Catalysis depends on E3, which acts as the Proton donor. The active-site Proton donor; for beta-elimination activity is K58. R110 and R152 together coordinate DNA. The segment at 237–271 (AVYGQTGKPCTVCGTPIARIRLGNRSTWFCPVCQK) adopts an FPG-type zinc-finger fold. R261 acts as the Proton donor; for delta-elimination activity in catalysis.

It belongs to the FPG family. As to quaternary structure, monomer. Zn(2+) is required as a cofactor.

It carries out the reaction Hydrolysis of DNA containing ring-opened 7-methylguanine residues, releasing 2,6-diamino-4-hydroxy-5-(N-methyl)formamidopyrimidine.. The catalysed reaction is 2'-deoxyribonucleotide-(2'-deoxyribose 5'-phosphate)-2'-deoxyribonucleotide-DNA = a 3'-end 2'-deoxyribonucleotide-(2,3-dehydro-2,3-deoxyribose 5'-phosphate)-DNA + a 5'-end 5'-phospho-2'-deoxyribonucleoside-DNA + H(+). Functionally, involved in base excision repair of DNA damaged by oxidation or by mutagenic agents. Acts as a DNA glycosylase that recognizes and removes damaged bases. Has a preference for oxidized purines, such as 7,8-dihydro-8-oxoguanine (8-oxoG). Has AP (apurinic/apyrimidinic) lyase activity and introduces nicks in the DNA strand. Cleaves the DNA backbone by beta-delta elimination to generate a single-strand break at the site of the removed base with both 3'- and 5'-phosphates. The chain is Formamidopyrimidine-DNA glycosylase from Geobacter sulfurreducens (strain ATCC 51573 / DSM 12127 / PCA).